The primary structure comprises 289 residues: Aquaporin PIP1-2 (289 aa).

The segment at 1-36 is disordered; that stretch reads MEGKEEDVRLGANKFSERQPIGTAAQGAADDKDYKE. 2 consecutive transmembrane segments (helical) span residues 58-78 and 93-115; these read IAEFVATFLFLYITILTVMGV and IAWSFGGMIFALVYCTAGISGGH. Residues 117 to 119 carry the NPA 1 motif; that stretch reads NPA. 3 helical membrane-spanning segments follow: residues 136 to 156, 178 to 198, and 212 to 232; these read LFYIIMQCLGAVCGAGVVKGF, GDGLGAEIVGTFILVYTVFSA, and ILAPLPIGFAVFLVHLATIPI. Positions 238-240 match the NPA 2 motif; the sequence is NPA. Residues 260 to 280 traverse the membrane as a helical segment; that stretch reads IFWVGPFIGAALAAIYHQVII.

It belongs to the MIP/aquaporin (TC 1.A.8) family. PIP (TC 1.A.8.11) subfamily. In terms of assembly, interacts with PIP2-1 to form heteromers. In terms of tissue distribution, highly expressed in developing tassels and at lower levels in roots, shoots, ears and embryos. Expressed in the root growing zone at 5-6 mm from the root tip. Expressed in xylem parenchyma.

It localises to the cell membrane. In terms of biological role, water channel required to facilitate the transport of water across cell membrane. Active as heteromers with PIP1-1, PIP2-1, PIP2-4 or PIP2-5, but not as homomers. This Zea mays (Maize) protein is Aquaporin PIP1-2 (PIP1-2).